A 71-amino-acid chain; its full sequence is Large ribosomal subunit protein bL31 (71 aa).

Zn(2+)-binding residues include C16, C18, C37, and C40.

This sequence belongs to the bacterial ribosomal protein bL31 family. Type A subfamily. In terms of assembly, part of the 50S ribosomal subunit. The cofactor is Zn(2+).

In terms of biological role, binds the 23S rRNA. The polypeptide is Large ribosomal subunit protein bL31 (Nitratidesulfovibrio vulgaris (strain DSM 19637 / Miyazaki F) (Desulfovibrio vulgaris)).